Reading from the N-terminus, the 249-residue chain is Type III pantothenate kinase (249 aa).

An ATP-binding site is contributed by 6-13; sequence DCGNSFIK. Substrate-binding positions include Tyr93 and 100–103; that span reads GLDR. Asp102 acts as the Proton acceptor in catalysis. Residue Asp122 participates in K(+) binding. Thr125 provides a ligand contact to ATP. A substrate-binding site is contributed by Thr181.

Belongs to the type III pantothenate kinase family. As to quaternary structure, homodimer. NH4(+) serves as cofactor. The cofactor is K(+).

It localises to the cytoplasm. It catalyses the reaction (R)-pantothenate + ATP = (R)-4'-phosphopantothenate + ADP + H(+). It functions in the pathway cofactor biosynthesis; coenzyme A biosynthesis; CoA from (R)-pantothenate: step 1/5. In terms of biological role, catalyzes the phosphorylation of pantothenate (Pan), the first step in CoA biosynthesis. This is Type III pantothenate kinase from Pseudomonas fluorescens (strain SBW25).